The primary structure comprises 395 residues: Calreticulin (395 aa).

A signal peptide spans 1–15; the sequence is MKSLCLLAIVAVVSA. Cysteine 101 and cysteine 133 are joined by a disulfide. An alpha-D-glucoside is bound by residues tyrosine 105, lysine 107, tyrosine 124, and aspartate 131. Repeat copies occupy residues 186 to 197, 205 to 216, 222 to 233, 239 to 250, 254 to 264, 268 to 278, and 282 to 292. A 4 X approximate repeats region spans residues 186–250; the sequence is AQTGSLEEDW…DAKKPEDWDD (65 aa). A P-domain region spans residues 193–301; it reads EDWDLLPAKK…PEYTPDDELY (109 aa). Basic and acidic residues predominate over residues 202-212; it reads KIKDPDAKKPE. The segment at 202–255 is disordered; sequence KIKDPDAKKPEDWDEREYIDDAEDAKPEDWEKPEHIPDPDAKKPEDWDDEMDGE. Positions 213 to 224 are enriched in acidic residues; sequence DWDEREYIDDAE. The segment covering 225 to 246 has biased composition (basic and acidic residues); sequence DAKPEDWEKPEHIPDPDAKKPE. The 3 X approximate repeats stretch occupies residues 254–292; it reads GEWEPPMIDNPEYKGEWKPKQIKNPAYKGKWIHPEIENP. Residues 302-395 form a C-domain region; sequence SYESWGAIGF…KEEEEGHDEL (94 aa). Aspartate 312 contacts an alpha-D-glucoside. Positions 340–380 are enriched in basic and acidic residues; the sequence is ETFDKLKTVEKEKKEKADEETRKAEEEARKKAEEEKEAKKD. The disordered stretch occupies residues 340–395; sequence ETFDKLKTVEKEKKEKADEETRKAEEEARKKAEEEKEAKKDDDEEEKEEEEGHDEL. The span at 381–395 shows a compositional bias: acidic residues; it reads DDEEEKEEEEGHDEL. The short motif at 392–395 is the Prevents secretion from ER element; it reads HDEL.

This sequence belongs to the calreticulin family. Post-translationally, cleaved by caspase ced-3 in vitro.

It localises to the endoplasmic reticulum lumen. Its function is as follows. Molecular calcium-binding chaperone promoting folding, oligomeric assembly and quality control in the endoplasmic reticulum (ER) via the calreticulin/calnexin cycle. This lectin may interact transiently with almost all of the monoglucosylated glycoproteins that are synthesized in the ER. Probably by controlling the folding of extracellular matrix protein unc-52/Perlecan, may play a role in the formation of fibrous organelles, a hemidesmosome-like structure attaching muscles to the epidermis. Protects dopaminergic neurons against oxidative stress-induced neurodegeneration. May play a role in protection against ER stress. Plays a role in modulating lifespan, acting by influencing ER calcium homeostasis. This is Calreticulin (crt-1) from Caenorhabditis elegans.